A 216-amino-acid polypeptide reads, in one-letter code: Pyrophosphatase PpaX (216 aa).

Catalysis depends on D9, which acts as the Nucleophile.

The protein belongs to the HAD-like hydrolase superfamily. PpaX family. The cofactor is Mg(2+).

It carries out the reaction diphosphate + H2O = 2 phosphate + H(+). Its function is as follows. Hydrolyzes pyrophosphate formed during P-Ser-HPr dephosphorylation by HPrK/P. Might play a role in controlling the intracellular pyrophosphate pool. This is Pyrophosphatase PpaX from Bacillus cereus (strain ATCC 10987 / NRS 248).